The following is a 606-amino-acid chain: Phosphogluconate dehydratase (606 aa).

C156 and C223 together coordinate [4Fe-4S] cluster.

This sequence belongs to the IlvD/Edd family. [4Fe-4S] cluster serves as cofactor.

It carries out the reaction 6-phospho-D-gluconate = 2-dehydro-3-deoxy-6-phospho-D-gluconate + H2O. It participates in carbohydrate metabolism; Entner-Doudoroff pathway. Functionally, catalyzes the dehydration of 6-phospho-D-gluconate to 2-dehydro-3-deoxy-6-phospho-D-gluconate. This is Phosphogluconate dehydratase from Rhizobium meliloti (strain 1021) (Ensifer meliloti).